A 969-amino-acid chain; its full sequence is Protein translocase subunit SecA (969 aa).

ATP-binding positions include glutamine 99, glycine 117–threonine 121, and aspartate 631.

Belongs to the SecA family. Monomer and homodimer. Part of the essential Sec protein translocation apparatus which comprises SecA, SecYEG and auxiliary proteins SecDF. Other proteins may also be involved.

Its subcellular location is the cell inner membrane. It localises to the cytoplasm. The enzyme catalyses ATP + H2O + cellular proteinSide 1 = ADP + phosphate + cellular proteinSide 2.. In terms of biological role, part of the Sec protein translocase complex. Interacts with the SecYEG preprotein conducting channel. Has a central role in coupling the hydrolysis of ATP to the transfer of proteins into and across the cell membrane, serving as an ATP-driven molecular motor driving the stepwise translocation of polypeptide chains across the membrane. The protein is Protein translocase subunit SecA of Chlamydia felis (strain Fe/C-56) (Chlamydophila felis).